The primary structure comprises 397 residues: Probable transport protein MmpL6 (397 aa).

5 helical membrane passes run 190-210 (YDLLIAGIAALSLILLIMMII), 214-234 (LVAALVIVGTVALSLGASFGL), 242-262 (LLGIQLYWIVLALAVILLLAV), 293-313 (TGGVVTAAGLVFAATMSSFVF), and 328-348 (LGLLFDTLVVRAFMTPSIAVL).

It belongs to the resistance-nodulation-cell division (RND) (TC 2.A.6) family. MmpL subfamily.

The protein localises to the cell membrane. The polypeptide is Probable transport protein MmpL6 (mmpL6) (Mycobacterium tuberculosis (strain CDC 1551 / Oshkosh)).